We begin with the raw amino-acid sequence, 129 residues long: Small ribosomal subunit protein uS11 (129 aa).

This sequence belongs to the universal ribosomal protein uS11 family. As to quaternary structure, part of the 30S ribosomal subunit. Interacts with proteins S7 and S18. Binds to IF-3.

In terms of biological role, located on the platform of the 30S subunit, it bridges several disparate RNA helices of the 16S rRNA. Forms part of the Shine-Dalgarno cleft in the 70S ribosome. The sequence is that of Small ribosomal subunit protein uS11 from Nitratidesulfovibrio vulgaris (strain ATCC 29579 / DSM 644 / CCUG 34227 / NCIMB 8303 / VKM B-1760 / Hildenborough) (Desulfovibrio vulgaris).